Reading from the N-terminus, the 458-residue chain is MPKRSNGSLVVRCAVSVVRFSKENVSCDLASENFTFSRDSFPVVSTVLRVSEAVYRMAAVASLGSALSVSSAALSQNVSVSNNATKESAFLGLRMGEVAKFGGALLSVSTVAANLKSKPGVLSVNAVTAPAETMNKPSSKKTATKSTCIITGASSGLGLATAKALADTGEWHVIMACRDFLKAERAARSVGIPKDSYTVIHCDLASFDSVRAFVDNFRRTERQLDVLVCNAAVYFPTDKEPKFSAEGFELSVGTNHMGHFLLARLLMEDLQKAKDSLKRMIIVGSITGNSNTVAGNVPPKANLGHLRGLAGGLNGVNSSSMIDGGEFDGAKAYKDSKVCNMFTMQEFHRRYHAETGITFSSLYPGCIAETGLFRNHVTLFRTLFPPFQKYITKGYVSEEEAGKRMAQVVSDPKLSKSGVYWSWNKDSGSFENELSEEASNPEKAKRLWELSERLSGLV.

Belongs to the short-chain dehydrogenases/reductases (SDR) family. POR subfamily.

Its subcellular location is the plastid. It is found in the chloroplast. It catalyses the reaction chlorophyllide a + NADP(+) = protochlorophyllide a + NADPH + H(+). It functions in the pathway porphyrin-containing compound metabolism; chlorophyll biosynthesis. Functionally, phototransformation of protochlorophyllide (Pchlide) to chlorophyllide (Chlide). The sequence is that of Protochlorophyllide reductase, chloroplastic (PORA) from Marchantia paleacea (Liverwort).